We begin with the raw amino-acid sequence, 284 residues long: D-tagatose-1,6-bisphosphate aldolase subunit GatY (284 aa).

Residue D82 is the Proton donor of the active site. Residues H83 and H180 each contribute to the Zn(2+) site. G181 contacts dihydroxyacetone phosphate. H208 serves as a coordination point for Zn(2+). Dihydroxyacetone phosphate-binding positions include 209 to 211 and 230 to 233; these read GAS and NVAT.

Belongs to the class II fructose-bisphosphate aldolase family. TagBP aldolase GatY subfamily. Forms a complex with GatZ. Zn(2+) serves as cofactor.

The catalysed reaction is D-tagatofuranose 1,6-bisphosphate = D-glyceraldehyde 3-phosphate + dihydroxyacetone phosphate. Its pathway is carbohydrate metabolism; D-tagatose 6-phosphate degradation; D-glyceraldehyde 3-phosphate and glycerone phosphate from D-tagatose 6-phosphate: step 2/2. In terms of biological role, catalytic subunit of the tagatose-1,6-bisphosphate aldolase GatYZ, which catalyzes the reversible aldol condensation of dihydroxyacetone phosphate (DHAP or glycerone-phosphate) with glyceraldehyde 3-phosphate (G3P) to produce tagatose 1,6-bisphosphate (TBP). Requires GatZ subunit for full activity and stability. Is involved in the catabolism of galactitol. The protein is D-tagatose-1,6-bisphosphate aldolase subunit GatY of Salmonella typhi.